Reading from the N-terminus, the 66-residue chain is UPF0370 protein YpfN (66 aa).

A helical membrane pass occupies residues 4–24; that stretch reads LAKYWWILVLVFLVGVLLNVI. Residues 39-66 are disordered; sequence KPELPPHRDFNDKWDDEDDWPKKDQPKK. Residues 42 to 51 are compositionally biased toward basic and acidic residues; that stretch reads LPPHRDFNDK.

The protein belongs to the UPF0370 family.

It is found in the cell membrane. The sequence is that of UPF0370 protein YpfN from Salmonella paratyphi C (strain RKS4594).